The following is a 452-amino-acid chain: Keratin, type I cytoskeletal 42 (452 aa).

The segment at 4–93 (TTSIRQFSTS…GVSDALLGGS (90 aa)) is head. Coiled-coil stretches lie at residues 93 to 132 (SEKETMQNLNDRLATYLDRVRALEEANTDLEVKIREWYKK) and 188 to 407 (NLRM…HLAT). The segment at 94 to 129 (EKETMQNLNDRLATYLDRVRALEEANTDLEVKIREW) is coil 1A. Residues 94 to 405 (EKETMQNLND…RLLEGEDAHL (312 aa)) form the IF rod domain. The tract at residues 130–147 (YKKQGPGPARDYSPYFKT) is linker 1. A coil 1B region spans residues 148–239 (IEDLRNKILA…KNHEEEMNAL (92 aa)). A linker 12 region spans residues 240–262 (RGQVGGDVNVEMDAAPGVDLSRI). The coil 2 stretch occupies residues 263–401 (LNEMRDQYEK…ATYRRLLEGE (139 aa)). A tail region spans residues 402–452 (DAHLATQYSSSLASQASREGTVTSRQVRTIVEEVQDGKVVSSREQVHRSTH).

This sequence belongs to the intermediate filament family. In terms of assembly, heterodimer of a type I and a type II keratin. Colocalizes with KRT8/KRT18 filament network.

It localises to the cytoplasm. The chain is Keratin, type I cytoskeletal 42 from Rattus norvegicus (Rat).